Consider the following 467-residue polypeptide: MTSPKPIRTRFAPSPTGFLHLGGARTALFSWAFARHHKGVFVLRIEDTDVERSTDAAVQAILDSMDWLGMQPDEGPFYQMKRLDRYSEVLQSMLAAGTAYHCYSSPEEVEAMREAARARGDKPRYDGTWRPEPGKTLPAIPEGRKPVIRFKNPQDGVTAWDDMVKGPVSFDNNELDDLIIARPDGTPTYNFCVVVDDWDMGMTHVIRGDDHVNNTPRQINILKALGADVPQYGHVPMILGPDGQKLSKRHGAVNVMEYDDQGYLPEAMVNYLARLGWSHGDAELFSREEFVRWFDTHHLSKSPSQWDPKKLNWVNAHYIKAMDNAELAQRVAPRIAKRGGDASRADLADIMGLFKDRAETLEQLADDAMLFCAPFQAAPQELATQHLTPAAREALAGFAAAAAGTEWTREAISALIKAQLAERGLKMPQLAIPLRVAVTGRAQTPAVDAVLVLLGKDVVLERLKALL.

Positions 13–23 (PSPTGFLHLGG) match the 'HIGH' region motif. The segment covering 118-133 (ARGDKPRYDGTWRPEP) has biased composition (basic and acidic residues). The tract at residues 118–141 (ARGDKPRYDGTWRPEPGKTLPAIP) is disordered. Residues 245–249 (KLSKR) carry the 'KMSKS' region motif. Lysine 248 is a binding site for ATP.

The protein belongs to the class-I aminoacyl-tRNA synthetase family. Glutamate--tRNA ligase type 1 subfamily. As to quaternary structure, monomer.

It is found in the cytoplasm. The enzyme catalyses tRNA(Glu) + L-glutamate + ATP = L-glutamyl-tRNA(Glu) + AMP + diphosphate. Functionally, catalyzes the attachment of glutamate to tRNA(Glu) in a two-step reaction: glutamate is first activated by ATP to form Glu-AMP and then transferred to the acceptor end of tRNA(Glu). This Bordetella avium (strain 197N) protein is Glutamate--tRNA ligase.